A 158-amino-acid polypeptide reads, in one-letter code: Cytochrome c-type biogenesis protein CcmE (158 aa).

The Cytoplasmic portion of the chain corresponds to 1 to 23 (MNSQSFKNFPSLKFISKKRRKER). A helical; Signal-anchor for type II membrane protein transmembrane segment spans residues 24-44 (LLMVLLCLFIMAITTGLIVYA). The Periplasmic segment spans residues 45 to 158 (MRNTANFFRT…DRLKKHHDIK (114 aa)). Residues His-138 and Tyr-142 each coordinate heme.

This sequence belongs to the CcmE/CycJ family.

It is found in the cell inner membrane. Its function is as follows. Heme chaperone required for the biogenesis of c-type cytochromes. Transiently binds heme delivered by CcmC and transfers the heme to apo-cytochromes in a process facilitated by CcmF and CcmH. This chain is Cytochrome c-type biogenesis protein CcmE, found in Bartonella bacilliformis (strain ATCC 35685 / KC583 / Herrer 020/F12,63).